Here is an 860-residue protein sequence, read N- to C-terminus: RNA-dependent RNA polymerase (860 aa).

A disordered region spans residues 839–860 (PFSSSESDEPRAKEIGPNRGPE). Positions 846–860 (DEPRAKEIGPNRGPE) are enriched in basic and acidic residues.

This sequence belongs to the ssRNA positive-strand viruses RNA-directed RNA polymerase family.

It catalyses the reaction RNA(n) + a ribonucleoside 5'-triphosphate = RNA(n+1) + diphosphate. RNA-dependent RNA polymerase which replicates the viral genome. The sequence is that of RNA-dependent RNA polymerase from Ourmia melon virus (isolate Melon/Iran/VE9) (OuMV).